The following is a 161-amino-acid chain: Lipoprotein signal peptidase (161 aa).

4 helical membrane-spanning segments follow: residues 11-31, 44-64, 66-86, and 100-120; these read PLFWQVAIAGIILDQLSKLWV, LWSGVFHFTYVLNTGAAFSAF, GGAGWLKWLSLAVSVGLIIFA, and GCILAGAVGNGIDRFLFGHVI. Catalysis depends on residues Asp-121 and Asp-137. A helical transmembrane segment spans residues 135–155; the sequence is LADVSINIGIAALLWASFFPV.

Belongs to the peptidase A8 family.

It is found in the cell inner membrane. The enzyme catalyses Release of signal peptides from bacterial membrane prolipoproteins. Hydrolyzes -Xaa-Yaa-Zaa-|-(S,diacylglyceryl)Cys-, in which Xaa is hydrophobic (preferably Leu), and Yaa (Ala or Ser) and Zaa (Gly or Ala) have small, neutral side chains.. The protein operates within protein modification; lipoprotein biosynthesis (signal peptide cleavage). Functionally, this protein specifically catalyzes the removal of signal peptides from prolipoproteins. The polypeptide is Lipoprotein signal peptidase (Synechocystis sp. (strain ATCC 27184 / PCC 6803 / Kazusa)).